The chain runs to 209 residues: Transmembrane domain-containing protein TMIGD3 (209 aa).

The first 15 residues, 1–15, serve as a signal peptide directing secretion; it reads MEFLLLLSLALFSDA. Residues 152-172 form a helical membrane-spanning segment; sequence SILIICILITSLGIIFIISHL. Positions 179–201 are disordered; it reads QRNREVTGKSISRNPQASQGPSM. The span at 187 to 201 shows a compositional bias: polar residues; that stretch reads KSISRNPQASQGPSM.

It is found in the membrane. This chain is Transmembrane domain-containing protein TMIGD3 (Tmigd3), found in Mus musculus (Mouse).